A 533-amino-acid chain; its full sequence is Amidophosphoribosyltransferase (533 aa).

The active-site Nucleophile is cysteine 2. Positions 2–238 (CGILALMLAD…PGECVFIRRS (237 aa)) constitute a Glutamine amidotransferase type-2 domain. 2 residues coordinate Mg(2+): aspartate 383 and aspartate 384. Serine 506 carries the phosphoserine modification.

In the C-terminal section; belongs to the purine/pyrimidine phosphoribosyltransferase family. Mg(2+) serves as cofactor.

It catalyses the reaction 5-phospho-beta-D-ribosylamine + L-glutamate + diphosphate = 5-phospho-alpha-D-ribose 1-diphosphate + L-glutamine + H2O. It functions in the pathway purine metabolism; IMP biosynthesis via de novo pathway; N(1)-(5-phospho-D-ribosyl)glycinamide from 5-phospho-alpha-D-ribose 1-diphosphate: step 1/2. The polypeptide is Amidophosphoribosyltransferase (ade4) (Schizosaccharomyces pombe (strain 972 / ATCC 24843) (Fission yeast)).